Reading from the N-terminus, the 446-residue chain is Phosphoglucosamine mutase (446 aa).

Residue Ser101 is the Phosphoserine intermediate of the active site. Residues Ser101, Asp240, Asp242, and Asp244 each contribute to the Mg(2+) site. Ser101 is modified (phosphoserine).

This sequence belongs to the phosphohexose mutase family. It depends on Mg(2+) as a cofactor. Post-translationally, activated by phosphorylation.

The catalysed reaction is alpha-D-glucosamine 1-phosphate = D-glucosamine 6-phosphate. Its function is as follows. Catalyzes the conversion of glucosamine-6-phosphate to glucosamine-1-phosphate. This chain is Phosphoglucosamine mutase, found in Pseudomonas putida (strain ATCC 47054 / DSM 6125 / CFBP 8728 / NCIMB 11950 / KT2440).